An 802-amino-acid polypeptide reads, in one-letter code: Ribosomal protein S6 kinase alpha-5 (802 aa).

Positions 1–22 (MEEEGGSSGGAAGTSADGGDGG) are enriched in gly residues. A disordered region spans residues 1 to 23 (MEEEGGSSGGAAGTSADGGDGGE). Residues 49 to 318 (FELLKVLGTG…ADEIKEHLFF (270 aa)) enclose the Protein kinase 1 domain. ATP is bound by residues 55–63 (LGTGAYGKV) and Lys81. Asp177 acts as the Proton acceptor in catalysis. Ser212 is modified (phosphoserine; by autocatalysis). Residues 319–387 (QKINWDDLAA…VAPSILFKRN (69 aa)) enclose the AGC-kinase C-terminal domain. Position 360 is a phosphoserine; by MAPK1, MAPK3 and MAPK14 (Ser360). Ser376 and Ser381 each carry phosphoserine; by autocatalysis. A Protein kinase 2 domain is found at 426–687 (DLKDKPLGEG…MSGLRYNEWL (262 aa)). ATP-binding positions include 432–440 (LGEGSFSIC) and Lys455. The active-site Proton acceptor is the Asp544. Thr581 is subject to Phosphothreonine; by MAPK1, MAPK3 and MAPK14. 4 positions are modified to phosphoserine: Ser647, Ser657, Ser691, and Ser695. At Thr700 the chain carries Phosphothreonine; by MAPK1, MAPK3 and MAPK14. A disordered region spans residues 741 to 802 (AKRRKMKKTS…TLFQFSDSVA (62 aa)). A compositionally biased stretch (low complexity) spans 749-779 (TSTSTETRSSSSESSHSSSSHSHGKTTPTKT). Phosphoserine; by autocatalysis occurs at positions 750, 752, and 758. A compositionally biased stretch (polar residues) spans 780 to 802 (LQPSNPADSNNPETLFQFSDSVA). Ser798 is subject to Phosphoserine.

It belongs to the protein kinase superfamily. AGC Ser/Thr protein kinase family. S6 kinase subfamily. Forms a complex with either MAPK1/ERK2 or MAPK3/ERK1 in quiescent cells which transiently dissociates following mitogenic stimulation. Also associates with MAPK14/p38-alpha. Activated RPS6KA5 associates with and phosphorylates the NF-kappa-B p65 subunit RELA. Interacts with CREBBP and EP300. Mg(2+) serves as cofactor. In terms of processing, ser-376 and Thr-581 phosphorylation is required for kinase activity. Ser-376 and Ser-212 are autophosphorylated by the C-terminal kinase domain, and their phosphorylation is essential for the catalytic activity of the N-terminal kinase domain. Phosphorylated at Ser-360, Thr-581 and Thr-700 by MAPK1/ERK2, MAPK3/ERK1 and MAPK14/p38-alpha. Autophosphorylated at Ser-750, Ser-752 and Ser-758 by the N-terminal kinase domain. Post-translationally, ubiquitinated.

It is found in the nucleus. It carries out the reaction L-seryl-[protein] + ATP = O-phospho-L-seryl-[protein] + ADP + H(+). It catalyses the reaction L-threonyl-[protein] + ATP = O-phospho-L-threonyl-[protein] + ADP + H(+). With respect to regulation, activated by phosphorylation at Ser-360, Thr-581 and Thr-700 by MAPK1/ERK2, MAPK3/ERK1 and MAPK14/p38-alpha, and by further autophosphorylation of Ser-212, Ser-376 and Ser-381 by the activated C-terminal kinase domain. The active N-terminal kinase domain finally phosphorylates downstream substrates, as well as Ser-750, Ser-752 and Ser-758 in its own C-terminal region. Serine/threonine-protein kinase that is required for the mitogen or stress-induced phosphorylation of the transcription factors CREB1 and ATF1 and for the regulation of the transcription factors RELA, STAT3 and ETV1/ER81, and that contributes to gene activation by histone phosphorylation and functions in the regulation of inflammatory genes. Phosphorylates CREB1 and ATF1 in response to mitogenic or stress stimuli such as UV-C irradiation, epidermal growth factor (EGF) and anisomycin. Plays an essential role in the control of RELA transcriptional activity in response to TNF and upon glucocorticoid, associates in the cytoplasm with the glucocorticoid receptor NR3C1 and contributes to RELA inhibition and repression of inflammatory gene expression. In skeletal myoblasts is required for phosphorylation of RELA at 'Ser-276' during oxidative stress. In erythropoietin-stimulated cells, is necessary for the 'Ser-727' phosphorylation of STAT3 and regulation of its transcriptional potential. Phosphorylates ETV1/ER81 at 'Ser-191' and 'Ser-216', and thereby regulates its ability to stimulate transcription, which may be important during development and breast tumor formation. Directly represses transcription via phosphorylation of 'Ser-1' of histone H2A. Phosphorylates 'Ser-10' of histone H3 in response to mitogenics, stress stimuli and EGF, which results in the transcriptional activation of several immediate early genes, including proto-oncogenes c-fos/FOS and c-jun/JUN. May also phosphorylate 'Ser-28' of histone H3. Mediates the mitogen- and stress-induced phosphorylation of high mobility group protein 1 (HMGN1/HMG14). In lipopolysaccharide-stimulated primary macrophages, acts downstream of the Toll-like receptor TLR4 to limit the production of pro-inflammatory cytokines. Functions probably by inducing transcription of the MAP kinase phosphatase DUSP1 and the anti-inflammatory cytokine interleukin 10 (IL10), via CREB1 and ATF1 transcription factors. Plays a role in neuronal cell death by mediating the downstream effects of excitotoxic injury. Phosphorylates TRIM7 at 'Ser-107' in response to growth factor signaling via the MEK/ERK pathway, thereby stimulating its ubiquitin ligase activity. This Pongo abelii (Sumatran orangutan) protein is Ribosomal protein S6 kinase alpha-5 (RPS6KA5).